Here is a 336-residue protein sequence, read N- to C-terminus: Tryptophan--tRNA ligase (336 aa).

ATP is bound by residues 13–15 and 21–22; these read QPS and GN. The 'HIGH' region motif lies at 14–22; it reads PSGNLTIGN. L-tryptophan is bound at residue D140. ATP is bound by residues 152–154, I191, and 200–204; these read GQD and KMSKS. The 'KMSKS' region signature appears at 200 to 204; sequence KMSKS.

It belongs to the class-I aminoacyl-tRNA synthetase family. In terms of assembly, homodimer.

Its subcellular location is the cytoplasm. The enzyme catalyses tRNA(Trp) + L-tryptophan + ATP = L-tryptophyl-tRNA(Trp) + AMP + diphosphate + H(+). In terms of biological role, catalyzes the attachment of tryptophan to tRNA(Trp). The sequence is that of Tryptophan--tRNA ligase from Buchnera aphidicola subsp. Schizaphis graminum (strain Sg).